The chain runs to 190 residues: MSEPQGQELRAECPVCWNPFNNTFHTPKVLDCCHSFCVECLAHLSLVTPARRRLLCPLCRQPTVLASGQPVTDLPTDTAMLTLLRLEPHHVILEGHQLCLKDQPKSRYFLRQPRVYTLDLGAEPGSQTGLPQDTAPDTRPVPIPSHYSLRECVRNPHFRIFAYLMAVILSVTLLLIFSIFWTKQFFWGMG.

The Cytoplasmic segment spans residues 1-159 (MSEPQGQELR…RECVRNPHFR (159 aa)). Residues 13 to 60 (CPVCWNPFNNTFHTPKVLDCCHSFCVECLAHLSLVTPARRRLLCPLCR) form an RING-type zinc finger. The chain crosses the membrane as a helical; Anchor for type IV membrane protein span at residues 160-180 (IFAYLMAVILSVTLLLIFSIF). At 181–190 (WTKQFFWGMG) the chain is on the lumenal side.

In terms of assembly, interacts with FATE1. Interacts with SEC16A. Interacts with BCL2L1. In terms of processing, autoubiquitinated (in vitro). In terms of tissue distribution, highly expressed in the kidney and testis.

The protein localises to the endoplasmic reticulum membrane. It localises to the endoplasmic reticulum. The protein resides in the golgi apparatus. Its subcellular location is the cis-Golgi network membrane. It is found in the lysosome membrane. It carries out the reaction S-ubiquitinyl-[E2 ubiquitin-conjugating enzyme]-L-cysteine + [acceptor protein]-L-lysine = [E2 ubiquitin-conjugating enzyme]-L-cysteine + N(6)-ubiquitinyl-[acceptor protein]-L-lysine.. The protein operates within protein modification; protein ubiquitination. Its function is as follows. Acts as an E3 ubiquitin ligase catalyzing the covalent attachment of ubiquitin moieties onto substrate proteins. Triggers apoptosis in response to prolonged ER stress by mediating the polyubiquitination and subsequent proteasomal degradation of BCL2L1. May collaborate with FATE1 to restrain BIK protein levels thus regulating apoptotic signaling. The chain is E3 ubiquitin-protein ligase RNF183 (Rnf183) from Mus musculus (Mouse).